Reading from the N-terminus, the 218-residue chain is Hypoxanthine-guanine phosphoribosyltransferase (218 aa).

The residue at position 2 (Ala2) is an N-acetylalanine. Lys69 lines the GMP pocket. Position 103 is an N6-acetyllysine (Lys103). A Glycyl lysine isopeptide (Lys-Gly) (interchain with G-Cter in SUMO1); alternate cross-link involves residue Lys115. Lys115 participates in a covalent cross-link: Glycyl lysine isopeptide (Lys-Gly) (interchain with G-Cter in SUMO2); alternate. GMP-binding positions include 134-142 (EDIIDTGKT), Lys166, 186-188 (KFV), and Asp194. Asp138 acts as the Proton acceptor in catalysis. Thr142 bears the Phosphothreonine mark. A Mg(2+)-binding site is contributed by Asp194.

It belongs to the purine/pyrimidine phosphoribosyltransferase family. In terms of assembly, homotetramer. It depends on Mg(2+) as a cofactor.

Its subcellular location is the cytoplasm. It carries out the reaction IMP + diphosphate = hypoxanthine + 5-phospho-alpha-D-ribose 1-diphosphate. It catalyses the reaction GMP + diphosphate = guanine + 5-phospho-alpha-D-ribose 1-diphosphate. Its pathway is purine metabolism; IMP biosynthesis via salvage pathway; IMP from hypoxanthine: step 1/1. Converts guanine to guanosine monophosphate, and hypoxanthine to inosine monophosphate. Transfers the 5-phosphoribosyl group from 5-phosphoribosylpyrophosphate onto the purine. Plays a central role in the generation of purine nucleotides through the purine salvage pathway. This chain is Hypoxanthine-guanine phosphoribosyltransferase (HPRT1), found in Sus scrofa (Pig).